The sequence spans 556 residues: Formate--tetrahydrofolate ligase (556 aa).

Position 65-72 (65-72 (TPAGEGKS)) interacts with ATP.

The protein belongs to the formate--tetrahydrofolate ligase family.

The enzyme catalyses (6S)-5,6,7,8-tetrahydrofolate + formate + ATP = (6R)-10-formyltetrahydrofolate + ADP + phosphate. It functions in the pathway one-carbon metabolism; tetrahydrofolate interconversion. The polypeptide is Formate--tetrahydrofolate ligase (Streptococcus pneumoniae (strain Taiwan19F-14)).